We begin with the raw amino-acid sequence, 386 residues long: ORC1-type DNA replication protein 3 (386 aa).

ATP is bound by residues 65–69 (TGKTF) and Tyr-206.

The protein belongs to the CDC6/cdc18 family.

Functionally, involved in regulation of DNA replication. The sequence is that of ORC1-type DNA replication protein 3 (cdc6-3) from Sulfurisphaera tokodaii (strain DSM 16993 / JCM 10545 / NBRC 100140 / 7) (Sulfolobus tokodaii).